The primary structure comprises 165 residues: MKCPYCGQLNNRVVDSRLSRSEFAVRRRRECLDCMRRFTTYEKVEDLPVMVVKKDGRREEFNRDKILSGIKKACEKRAISVDQIEEVVDSVERDFRDANEKEISSTVVGNKVMELLHRLDDVAYVRFASVYREFKDVDDFIEELKSLIPRKILEDKKPDGCSDDG.

The segment at 3–34 (CPYCGQLNNRVVDSRLSRSEFAVRRRRECLDC) is a zinc-finger region. Residues 49-139 (VMVVKKDGRR…VYREFKDVDD (91 aa)) enclose the ATP-cone domain.

It belongs to the NrdR family. Requires Zn(2+) as cofactor.

In terms of biological role, negatively regulates transcription of bacterial ribonucleotide reductase nrd genes and operons by binding to NrdR-boxes. The polypeptide is Transcriptional repressor NrdR (Desulforapulum autotrophicum (strain ATCC 43914 / DSM 3382 / VKM B-1955 / HRM2) (Desulfobacterium autotrophicum)).